The following is a 739-amino-acid chain: Polyribonucleotide nucleotidyltransferase (739 aa).

Residues aspartate 488 and aspartate 494 each contribute to the Mg(2+) site. In terms of domain architecture, KH spans 555-614 (PKIVTLKINPDKIRDVIGPGGKVINGIIDETGVKIDIDQDGTVFIASTDQDGINHARQLI). In terms of domain architecture, S1 motif spans 624 to 692 (GEEFDGTVRR…DKGRVNASHK (69 aa)). Residues 698-739 (GMSPEDRAAYDEKKKTERDSRPPRRDTGSRPPRDGQRPPRRN) are disordered. Over residues 701–739 (PEDRAAYDEKKKTERDSRPPRRDTGSRPPRDGQRPPRRN) the composition is skewed to basic and acidic residues.

The protein belongs to the polyribonucleotide nucleotidyltransferase family. It depends on Mg(2+) as a cofactor.

Its subcellular location is the cytoplasm. The catalysed reaction is RNA(n+1) + phosphate = RNA(n) + a ribonucleoside 5'-diphosphate. Functionally, involved in mRNA degradation. Catalyzes the phosphorolysis of single-stranded polyribonucleotides processively in the 3'- to 5'-direction. The chain is Polyribonucleotide nucleotidyltransferase from Exiguobacterium sibiricum (strain DSM 17290 / CCUG 55495 / CIP 109462 / JCM 13490 / 255-15).